A 351-amino-acid chain; its full sequence is UDP-N-acetylglucosamine transporter slc35b4 (351 aa).

The next 10 helical transmembrane spans lie at 6–26 (LISL…VISL), 37–57 (AILV…FVNI), 77–97 (IPLK…VLNN), 104–124 (IPIP…IVIG), 136–156 (QILS…SSMP), 173–193 (FSIG…LGLI), 209–229 (TIFY…DDIL), 252–274 (TLWV…VFIL), 282–302 (TCTL…VIYF), and 306–326 (FTSL…MYST).

It belongs to the nucleotide-sugar transporter family. SLC35B subfamily.

The protein localises to the golgi apparatus membrane. Sugar transporter that specifically mediates the transport of UDP-N-acetylglucosamine (UDP-GlcNAc) from cytosol into Golgi. This chain is UDP-N-acetylglucosamine transporter slc35b4 (slc35b4), found in Dictyostelium discoideum (Social amoeba).